The following is a 162-amino-acid chain: MSDKIGLFTGSFDPITNGHLDLIERASGLFDKLYVGVFTNPKKAGLLTGLERKAILEKLFVGMENIEVVLSENELVVDVAKRYGVTHLVRGLRNATDLEYESSFDFYNRQLAPGLETIYLIAKPELKFVSSSQVRELLYFKQDIGPYVPEIVSEEIRKNEEK.

Substrate is bound at residue Ser-11. ATP-binding positions include 11–12 (SF) and His-19. Lys-43, Val-76, and Arg-90 together coordinate substrate. Residues 91–93 (GLR), Glu-101, and 126–132 (LKFVSSS) contribute to the ATP site.

It belongs to the bacterial CoaD family. Homohexamer. Mg(2+) serves as cofactor.

Its subcellular location is the cytoplasm. The enzyme catalyses (R)-4'-phosphopantetheine + ATP + H(+) = 3'-dephospho-CoA + diphosphate. It participates in cofactor biosynthesis; coenzyme A biosynthesis; CoA from (R)-pantothenate: step 4/5. Functionally, reversibly transfers an adenylyl group from ATP to 4'-phosphopantetheine, yielding dephospho-CoA (dPCoA) and pyrophosphate. This chain is Phosphopantetheine adenylyltransferase, found in Streptococcus suis (strain 05ZYH33).